The chain runs to 665 residues: Cysteine-rich receptor-like protein kinase 26 (665 aa).

Positions 1–22 (MLSLLLPLISLLFQIQCFTVKS) are cleaved as a signal peptide. Residues 23 to 283 (QPVPLNQICS…GDKNRGVPKA (261 aa)) are Extracellular-facing. 2 Gnk2-homologous domains span residues 26–129 (PLNQ…NRTI) and 135–244 (ISPH…PWRF). N-linked (GlcNAc...) asparagine glycosylation is found at asparagine 33, asparagine 37, asparagine 67, asparagine 126, asparagine 146, and asparagine 266. The tract at residues 251–275 (DDPSSVPATPSRPPKNETRSVTQGD) is disordered. The helical transmembrane segment at 284 to 304 (LIFASASVAIVVLFIVLLVVF) threads the bilayer. Residues 305-665 (LKLRRKENIR…YNSNTELYPR (361 aa)) are Cytoplasmic-facing. One can recognise a Protein kinase domain in the interval 344–624 (FSLENKLGEG…VLMLDGHTIA (281 aa)). Residues 350-358 (LGEGGFGAV) and lysine 372 contribute to the ATP site. Tyrosine 417 carries the post-translational modification Phosphotyrosine. Aspartate 469 functions as the Proton acceptor in the catalytic mechanism. Phosphoserine is present on serine 473. Position 510 is a phosphothreonine (threonine 510). Phosphotyrosine is present on tyrosine 518. Residues 641-665 (SDSSSSLGHNAKTSNYNSNTELYPR) form a disordered region. The segment covering 647–665 (LGHNAKTSNYNSNTELYPR) has biased composition (polar residues).

It belongs to the protein kinase superfamily. Ser/Thr protein kinase family. CRK subfamily.

The protein localises to the membrane. It carries out the reaction L-seryl-[protein] + ATP = O-phospho-L-seryl-[protein] + ADP + H(+). The catalysed reaction is L-threonyl-[protein] + ATP = O-phospho-L-threonyl-[protein] + ADP + H(+). The sequence is that of Cysteine-rich receptor-like protein kinase 26 (CRK26) from Arabidopsis thaliana (Mouse-ear cress).